Consider the following 184-residue polypeptide: MLKLRQLQKEKQRQAAQAQAPAQGRSAASPAQLRVEKDLATLELPTTVTLDTKCLGSENKVYLRISPEEGVYRGGHFRFSVVFRDTYPIEPPTVKCLNTIYHPNIDYSGNICLNVLREDWSPVMDLQTVVLGLLFLFLEPNGSDPLNRQAADTMLRDPYRFETNVQATMMGGHLDGQVFDNVRH.

Positions 10–29 are disordered; sequence EKQRQAAQAQAPAQGRSAAS. Residues 14 to 29 show a composition bias toward low complexity; it reads QAAQAQAPAQGRSAAS. The 145-residue stretch at 30-174 folds into the UBC core domain; it reads PAQLRVEKDL…VQATMMGGHL (145 aa). The Glycyl thioester intermediate role is filled by Cys-112.

Belongs to the ubiquitin-conjugating enzyme family. UBC12 subfamily.

It catalyses the reaction [E1 NEDD8-activating enzyme]-S-[NEDD8 protein]-yl-L-cysteine + [E2 NEDD8-conjugating enzyme]-L-cysteine = [E1 NEDD8-activating enzyme]-L-cysteine + [E2 NEDD8-conjugating enzyme]-S-[NEDD8-protein]-yl-L-cysteine.. The protein operates within protein modification; protein neddylation. Functionally, accepts the ubiquitin-like protein NEDD8/RUB1 from the UBA3-ULA1 E1 complex and catalyzes its covalent attachment to other proteins. This Eremothecium gossypii (strain ATCC 10895 / CBS 109.51 / FGSC 9923 / NRRL Y-1056) (Yeast) protein is NEDD8-conjugating enzyme UBC12 (UBC12).